A 148-amino-acid chain; its full sequence is UPF0591 membrane protein C15E1.02c (148 aa).

The next 3 helical transmembrane spans lie at 14 to 34 (AILLGIAFDHAASFLVYGPLM), 80 to 102 (LLQLTGTVTLKGAFFVGLYVFGA), and 122 to 142 (ILVKTISSLVKSVGLSVALIG).

This sequence belongs to the UPF0591 family.

It is found in the membrane. The protein is UPF0591 membrane protein C15E1.02c of Schizosaccharomyces pombe (strain 972 / ATCC 24843) (Fission yeast).